The sequence spans 363 residues: Probable auxin efflux carrier component 5a (363 aa).

Helical transmembrane passes span 7–27, 39–59, 72–92, 103–123, 134–154, 222–242, 246–266, 281–301, 307–327, and 342–362; these read VYKV…GYGS, CDAV…FEFT, VAAD…WARF, SITS…VPMA, LVVQ…LFVL, FVGI…PSAF, VLIM…LFMA, LGLV…SIAV, VLRV…FIFA, and IFGM…LELI.

This sequence belongs to the auxin efflux carrier (TC 2.A.69.1) family. In terms of tissue distribution, expressed in leaves, shoot apex and panicles. Expressed in roots, stem bases, stems, leaves and young panicles.

It is found in the membrane. Functionally, may act as a component of the auxin efflux carrier. The sequence is that of Probable auxin efflux carrier component 5a from Oryza sativa subsp. japonica (Rice).